The chain runs to 235 residues: PRA1 family protein 1 (235 aa).

Residues 1–17 (MESNSNSNETMYGNPNI) are compositionally biased toward polar residues. The tract at residues 1–55 (MESNSNSNETMYGNPNINMGFVDSGNSNIGNNTGSMSPPPQQQQQPQQASSTPAG) is disordered. Low complexity predominate over residues 24–48 (SGNSNIGNNTGSMSPPPQQQQQPQQ). Helical transmembrane passes span 144-164 (SVFF…LLFI) and 187-207 (AFLS…LVGA).

Belongs to the PRA1 family.

Its subcellular location is the membrane. May act as a general Rab protein regulator. The chain is PRA1 family protein 1 (prafA) from Dictyostelium discoideum (Social amoeba).